Here is a 157-residue protein sequence, read N- to C-terminus: Cytochrome b6-f complex subunit 4 (157 aa).

A run of 3 helical transmembrane segments spans residues 35-55, 94-114, and 130-150; these read ILYI…GLGV, LVGV…AFIE, and LVYL…VLGI.

The protein belongs to the cytochrome b family. PetD subfamily. In terms of assembly, the 4 large subunits of the cytochrome b6-f complex are cytochrome b6, subunit IV (17 kDa polypeptide, petD), cytochrome f and the Rieske protein, while the 4 small subunits are petG, petL, petM and petN. The complex functions as a dimer.

Its subcellular location is the plastid. The protein localises to the chloroplast thylakoid membrane. Component of the cytochrome b6-f complex, which mediates electron transfer between photosystem II (PSII) and photosystem I (PSI), cyclic electron flow around PSI, and state transitions. This is Cytochrome b6-f complex subunit 4 from Amphidinium carterae (Dinoflagellate).